A 435-amino-acid chain; its full sequence is Matrix extracellular phosphoglycoprotein (435 aa).

The N-terminal stretch at M1–A16 is a signal peptide. The N-linked (GlcNAc...) asparagine glycan is linked to N71. Disordered regions lie at residues L124–L145 and L166–D435. The segment at P164–H186 is dentonin. The Cell attachment site signature appears at R169–D171. An O-linked (Xyl...) (chondroitin sulfate) serine glycan is attached at S178. Composition is skewed to basic and acidic residues over residues K267–R278 and S300–G313. A compositionally biased stretch (polar residues) spans G337 to Q346. Composition is skewed to basic residues over residues A382–R391 and R405–T415. An ASARM motif; interaction with PHEX region spans residues R418–D435. Residues E422–D435 show a composition bias toward low complexity.

The protein belongs to the PF07175/osteoregulin family. As to quaternary structure, interacts (via ASARM motif) with PHEX; the interaction is zinc-dependent. Phosphorylated on serine residues in the ASARM motif; the phosphorylation is important for the inhibition of bone mineralization. Post-translationally, cleaved by CTSB/cathepsin B; the cleavage is blocked by metalloprotease PHEX. Expressed in osteoblasts and osteocytes.

The protein localises to the secreted. It localises to the extracellular space. It is found in the extracellular matrix. Its function is as follows. Regulates renal phosphate excretion. Regulates bone mineralization by osteoblasts and cartilage mineralization by chondrocytes. Regulates the mineralization of the extracellular matrix of the craniofacial complex, such as teeth, bone and cartilage. Increases dental pulp stem cell proliferation. The polypeptide is Matrix extracellular phosphoglycoprotein (Rattus norvegicus (Rat)).